Reading from the N-terminus, the 148-residue chain is Probable transcriptional regulator SyrB (148 aa).

The tract at residues 1–58 is disordered; sequence MADESNTGPVAAAEAVAETQAPAGKRKSSSRRQRTAAGQVAESKTTAKPKRYSETERA. Over residues 7-23 the composition is skewed to low complexity; that stretch reads TGPVAAAEAVAETQAPA. Residues 24–34 show a composition bias toward basic residues; it reads GKRKSSSRRQR.

The protein belongs to the SyrB family.

Responsible for the repression of SyrM activity. The polypeptide is Probable transcriptional regulator SyrB (syrB) (Sinorhizobium fredii (strain NBRC 101917 / NGR234)).